The sequence spans 872 residues: Bifunctional heparan sulfate N-deacetylase/N-sulfotransferase 4 (872 aa).

Over 1–13 (MNLILKFRRSFRT) the chain is Cytoplasmic. A helical; Signal-anchor for type II membrane protein transmembrane segment spans residues 14-34 (LIVLLATFCLVSILISAYFLY). Residues 35–872 (SGYKQEMTLI…WLRQELQKVR (838 aa)) lie on the Lumenal side of the membrane. The tract at residues 36-588 (GYKQEMTLIE…KRHKDIWSRE (553 aa)) is heparan sulfate N-deacetylase 4. Residues N226, N341, and N391 are each glycosylated (N-linked (GlcNAc...) asparagine). A heparan sulfate N-sulfotransferase 4 region spans residues 589–872 (KTCDHLPKFL…WLRQELQKVR (284 aa)). K604 acts as the For sulfotransferase activity in catalysis. 604-608 (KTGTT) is a 3'-phosphoadenylyl sulfate binding site. N657 is a glycosylation site (N-linked (GlcNAc...) asparagine). S702 lines the 3'-phosphoadenylyl sulfate pocket. An N-linked (GlcNAc...) asparagine glycan is attached at N793. Cysteines 808 and 818 form a disulfide. 823 to 827 (KGRKY) serves as a coordination point for 3'-phosphoadenylyl sulfate.

Belongs to the sulfotransferase 1 family. NDST subfamily. As to quaternary structure, monomer. As to expression, expressed at low level in brain and throughout embryogenesis. Not expressed in other tissues.

The protein resides in the golgi apparatus membrane. It catalyses the reaction alpha-D-glucosaminyl-[heparan sulfate](n) + 3'-phosphoadenylyl sulfate = N-sulfo-alpha-D-glucosaminyl-[heparan sulfate](n) + adenosine 3',5'-bisphosphate + 2 H(+). It functions in the pathway glycan metabolism; heparan sulfate biosynthesis. It participates in glycan metabolism; heparin biosynthesis. Its function is as follows. Essential bifunctional enzyme that catalyzes both the N-deacetylation and the N-sulfation of glucosamine (GlcNAc) of the glycosaminoglycan in heparan sulfate. Modifies the GlcNAc-GlcA disaccharide repeating sugar backbone to make N-sulfated heparosan, a prerequisite substrate for later modifications in heparin biosynthesis. Has low deacetylase activity but high sulfotransferase activity. The polypeptide is Bifunctional heparan sulfate N-deacetylase/N-sulfotransferase 4 (Ndst4) (Mus musculus (Mouse)).